A 396-amino-acid chain; its full sequence is ATP phosphoribosyltransferase regulatory subunit (396 aa).

It belongs to the class-II aminoacyl-tRNA synthetase family. HisZ subfamily. As to quaternary structure, heteromultimer composed of HisG and HisZ subunits.

The protein resides in the cytoplasm. The protein operates within amino-acid biosynthesis; L-histidine biosynthesis; L-histidine from 5-phospho-alpha-D-ribose 1-diphosphate: step 1/9. Functionally, required for the first step of histidine biosynthesis. May allow the feedback regulation of ATP phosphoribosyltransferase activity by histidine. The polypeptide is ATP phosphoribosyltransferase regulatory subunit (Cellvibrio japonicus (strain Ueda107) (Pseudomonas fluorescens subsp. cellulosa)).